A 1295-amino-acid polypeptide reads, in one-letter code: Unconventional myosin-VI (1295 aa).

The Myosin N-terminal SH3-like domain maps to 2 to 53 (EDGRPVWAPHPTEGFQMGNIVDIGPDSLTIEPLGQKGKTFLALINQVFPAEE). Residues 57-771 (KDVEDNCSLM…KFAEFDQIMK (715 aa)) form the Myosin motor domain. Residue 151-158 (GESGAGKT) coordinates ATP. Ser-267 carries the post-translational modification Phosphoserine. The interval 273–317 (YLNRGCTRYFANKETDKQILQNRKTPEHLKAGSLKDPLLDDHGDF) is responsible for slow ATPase activity. Thr-405 carries the post-translational modification Phosphothreonine. At Ser-604 the chain carries Phosphoserine. Residues 651–673 (LNLLLDKLRSTGASFIRCIKPNL) are actin-binding. Residues 782 to 810 (KRVNHWLICSRWKKVQWCSLSVIKLKNKI) are required for binding calmodulin. Residues 813-842 (RAEACIKMQKTIRMWLCKRRHKPRIDGLVK) form the IQ domain. The three-helix bundle stretch occupies residues 835 to 916 (PRIDGLVKVG…EVLLSALQKK (82 aa)). An SAH region spans residues 917 to 984 (KQQEEEAERL…EDDEKRIQAE (68 aa)). Residues 934-955 (EKERKRREEDEQRRRKEEEERR) form a disordered region. Positions 1061-1286 (KEMSEILSRG…ESRQARPTYA (226 aa)) are interaction with TAX1BP1 and CALCOCO2/NDP52. Positions 1117–1119 (RRL) are interaction with OPTN. The residue at position 1156 (Ser-1156) is a Phosphoserine. The segment at 1158 to 1286 (QQNPAAQLPA…ESRQARPTYA (129 aa)) is interaction with TOM1.

Belongs to the TRAFAC class myosin-kinesin ATPase superfamily. Myosin family. As to quaternary structure, homodimer; dimerization seems to implicate the unfolding of the three-helix bundle region creating an additional calmodulin binding site, and cargo binding. Able to function as a monomer under specific conditions in vitro. Forms a complex with CFTR and DAB2 in the apical membrane of epithelial cells. Component of the DISP/DOCK7-induced septin displacement complex, at least composed of DOCK7, LRCH3 and MYO6. Binding to calmodulin through a unique insert, not found in other myosins, located in the neck region between the motor domain and the IQ domain appears to contribute to the directionality reversal. This interaction occurs only if the C-terminal lobe of calmodulin is occupied by calcium. Interaction with F-actin/ACTN1 occurs only at the apical brush border domain of the proximal tubule cells. Interacts with DAB2. In vitro, the C-terminal globular tail binds a C-terminal region of DAB2. Interacts with CFTR. Interacts with CABP5. Interacts (via residues 1158-1286) with TOM1 (via residues 392-463). Interacts (via residues 1060-1285) with OPTN. Interacts (via residues 1060-1285) with TAX1BP1 and CALCOCO2/NDP52. Interacts with TOM1L2. Interacts with CLIC5; may work together in a complex which also includes RDX and MYO6 to stabilize linkages between the plasma membrane and subjacent actin cytoskeleton at the base of stereocilia. Phosphorylation in the motor domain, induced by EGF, results in translocation of MYO6 from the cell surface to membrane ruffles and affects F-actin dynamics. Phosphorylated in vitro by p21-activated kinase (PAK). Expressed in the retina (at protein level).

The protein localises to the golgi apparatus. Its subcellular location is the trans-Golgi network membrane. It is found in the nucleus. The protein resides in the cytoplasm. It localises to the perinuclear region. The protein localises to the membrane. Its subcellular location is the clathrin-coated pit. It is found in the cytoplasmic vesicle. The protein resides in the clathrin-coated vesicle. It localises to the cell projection. The protein localises to the filopodium. Its subcellular location is the ruffle membrane. It is found in the microvillus. The protein resides in the cytosol. Its function is as follows. Myosins are actin-based motor molecules with ATPase activity. Unconventional myosins serve in intracellular movements. Myosin 6 is a reverse-direction motor protein that moves towards the minus-end of actin filaments. Has slow rate of actin-activated ADP release due to weak ATP binding. Functions in a variety of intracellular processes such as vesicular membrane trafficking and cell migration. Required for the structural integrity of the Golgi apparatus via the p53-dependent pro-survival pathway. Appears to be involved in a very early step of clathrin-mediated endocytosis in polarized epithelial cells. Together with TOM1, mediates delivery of endocytic cargo to autophagosomes thereby promoting autophagosome maturation and driving fusion with lysosomes. Links TOM1 with autophagy receptors, such as TAX1BP1; CALCOCO2/NDP52 and OPTN. May act as a regulator of F-actin dynamics. As part of the DISP complex, may regulate the association of septins with actin and thereby regulate the actin cytoskeleton. May play a role in transporting DAB2 from the plasma membrane to specific cellular targets. May play a role in the extension and network organization of neurites. Required for structural integrity of inner ear hair cells. Required for the correct localization of CLIC5 and RDX at the stereocilium base. Modulates RNA polymerase II-dependent transcription. This is Unconventional myosin-VI from Bos taurus (Bovine).